The following is a 345-amino-acid chain: Anthranilate phosphoribosyltransferase (345 aa).

5-phospho-alpha-D-ribose 1-diphosphate is bound by residues glycine 80, 83–84, threonine 88, 90–93, 108–116, and serine 120; these read GD, NIST, and KHGNRSVTS. Glycine 80 contributes to the anthranilate binding site. Position 92 (serine 92) interacts with Mg(2+). Asparagine 111 contacts anthranilate. Position 166 (arginine 166) interacts with anthranilate. Positions 229 and 230 each coordinate Mg(2+).

Belongs to the anthranilate phosphoribosyltransferase family. In terms of assembly, homodimer. It depends on Mg(2+) as a cofactor.

It carries out the reaction N-(5-phospho-beta-D-ribosyl)anthranilate + diphosphate = 5-phospho-alpha-D-ribose 1-diphosphate + anthranilate. It participates in amino-acid biosynthesis; L-tryptophan biosynthesis; L-tryptophan from chorismate: step 2/5. Functionally, catalyzes the transfer of the phosphoribosyl group of 5-phosphorylribose-1-pyrophosphate (PRPP) to anthranilate to yield N-(5'-phosphoribosyl)-anthranilate (PRA). The protein is Anthranilate phosphoribosyltransferase of Chlorobium phaeobacteroides (strain BS1).